The following is a 238-amino-acid chain: Endothelial protein C receptor (238 aa).

The first 17 residues, 1 to 17, serve as a signal peptide directing secretion; that stretch reads MLTTLLPILLLSGWAFC. Over 18-210 the chain is Extracellular; sequence SQDASDGLQR…GSQTSRSYTS (193 aa). Residues asparagine 47, asparagine 64, asparagine 136, and asparagine 172 are each glycosylated (N-linked (GlcNAc...) asparagine). An intrachain disulfide couples cysteine 118 to cysteine 186. A helical transmembrane segment spans residues 211-231; sequence LVLGVLVGSFIIAGVAVGIFL. At 232 to 238 the chain is on the cytoplasmic side; that stretch reads CTGGRRC.

In terms of processing, N-glycosylated. A soluble form exists; probably released by a metalloprotease. Seems to have the same activity as the membrane-bound form. In terms of tissue distribution, expressed strongly in the endothelial cells of arteries and veins in heart and lung, less intensely in capillaries in the lung and skin, and not at all in the endothelium of small vessels of the liver and kidney.

It is found in the membrane. Functionally, binds activated protein C. Enhances protein C activation by the thrombin-thrombomodulin complex; plays a role in the protein C pathway controlling blood coagulation. This is Endothelial protein C receptor (PROCR) from Homo sapiens (Human).